The chain runs to 999 residues: Sarcoplasmic/endoplasmic reticulum calcium ATPase 3 (999 aa).

Topologically, residues 1–48 are cytoplasmic; the sequence is MEAAHSVPVQDVLSRFGVAESCGLSPEQVRRNREKYGPNELPAEERKS. The helical transmembrane segment at 49 to 69 threads the bilayer; the sequence is LWELVLEQFEDLLVRILLMAA. Topologically, residues 70-89 are lumenal; sequence FLSFILAWFEEGEESTTAFV. A helical membrane pass occupies residues 90 to 110; it reads EPIVIIMILIANAVVGVWQER. Residues 111 to 253 are Cytoplasmic-facing; that stretch reads NAESAIEALK…PEKTPLQQKL (143 aa). A helical transmembrane segment spans residues 254-273; the sequence is DEFSQQLSKVIFLVCIAVWV. Topologically, residues 274–295 are lumenal; sequence INISHFSDPVHGGSWFRGAIYY. A helical membrane pass occupies residues 296–313; sequence FKTSVALAVAAIPEGLPA. Residues Val-304, Ala-305, Ile-307, and Glu-309 each contribute to the Ca(2+) site. The Cytoplasmic segment spans residues 314–757; sequence VITTCLALGT…EEGRAIYNNM (444 aa). The active-site 4-aspartylphosphate intermediate is the Asp-351. The Mg(2+) site is built by Asp-351 and Thr-353. Thr-353 contributes to the ATP binding site. Positions 370 to 400 are interaction with phospholamban 1; sequence EKVEGTQCSLHEFSITGSTYAPEGQILKDEK. ATP-binding residues include Glu-442, Arg-489, Lys-515, Arg-560, Thr-625, Gly-626, Asp-627, Arg-678, and Lys-684. Residue Asp-703 participates in Mg(2+) binding. An ATP-binding site is contributed by Asn-706. The helical transmembrane segment at 758–777 threads the bilayer; the sequence is KQFIRYLISSNVGEVVCIFL. Ca(2+) contacts are provided by Asn-768 and Glu-771. Residues 778-787 are Lumenal-facing; the sequence is TAILGLPEAL. Residues 788–808 traverse the membrane as a helical segment; sequence IPVQLLWVNLVTDGLPATALG. The segment at 788 to 808 is interaction with phospholamban 2; that stretch reads IPVQLLWVNLVTDGLPATALG. Ca(2+) contacts are provided by Asn-796, Thr-799, and Asp-800. Residues 809–828 are Cytoplasmic-facing; that stretch reads FNPPDLDIMDKLPRNPKEPL. The chain crosses the membrane as a helical span at residues 829-851; sequence ISGWLFFRYLAIGVYVGLATVGA. Residues 852–897 are Lumenal-facing; that stretch reads ATWWFLYDAEGPQVSFHQLRNFMRCTEDNPIFEGVNCEIFESRYPT. A helical membrane pass occupies residues 898 to 917; sequence TMALSVLVTIEMCNALNSVS. Glu-908 is a Ca(2+) binding site. Topologically, residues 918–930 are cytoplasmic; sequence ENQSLLRMPPWLN. The helical transmembrane segment at 931–949 threads the bilayer; it reads IWLLGAIVMSMALHFFILY. At 950–964 the chain is on the lumenal side; that stretch reads VKPMPLIFQVTPLSW. A helical membrane pass occupies residues 965 to 985; sequence PQWVVVLKISLPVILLDEGLK. At 986-999 the chain is on the cytoplasmic side; that stretch reads YLSRNHLEGEEDKK.

This sequence belongs to the cation transport ATPase (P-type) (TC 3.A.3) family. Type IIA subfamily. As to quaternary structure, interacts with sarcolipin (SLN). Interacts with phospholamban (PLN). Interacts with myoregulin (MRLN). Interacts with DWORF. It depends on Mg(2+) as a cofactor. In terms of tissue distribution, found in spleen, lung, intestine and brain.

Its subcellular location is the endoplasmic reticulum membrane. The protein localises to the sarcoplasmic reticulum membrane. It carries out the reaction Ca(2+)(in) + ATP + H2O = Ca(2+)(out) + ADP + phosphate + H(+). Its activity is regulated as follows. Inhibited by sarcolipin (SLN), phospholamban (PLN) and myoregulin (MRLN). Enhanced by DWORF; DWORF increases activity by displacing sarcolipin (SLN), phospholamban (PLN) and myoregulin (MRLN). Functionally, this magnesium-dependent enzyme catalyzes the hydrolysis of ATP coupled with the transport of calcium. Transports calcium ions from the cytosol into the sarcoplasmic/endoplasmic reticulum lumen. Contributes to calcium sequestration involved in muscular excitation/contraction. This is Sarcoplasmic/endoplasmic reticulum calcium ATPase 3 (ATP2A3) from Gallus gallus (Chicken).